The chain runs to 523 residues: Sensory neuron membrane protein 1 (523 aa).

The Cytoplasmic segment spans residues 1-11 (MQLPRELKYAA). The chain crosses the membrane as a helical span at residues 12 to 32 (IAGGVALFGLIFGWVLFPTIL). Topologically, residues 33–458 (KSQLKKEMAL…HQLFIPKRVV (426 aa)) are extracellular. Asparagine 229 carries an N-linked (GlcNAc...) asparagine glycan. 3 disulfide bridges follow: cysteine 268-cysteine 333, cysteine 297-cysteine 352, and cysteine 335-cysteine 341. Asparagine 440 carries N-linked (GlcNAc...) asparagine glycosylation. The chain crosses the membrane as a helical span at residues 459-479 (GVLRWWMVSFGSLGAVIGIVF). The Cytoplasmic segment spans residues 480–523 (HFRDHIMRLAVSGDTKVSKVIPEVEEQKDISVIGQAQEPAKVNI).

It belongs to the CD36 family.

It is found in the cell membrane. Plays an olfactory role that is not restricted to pheromone sensitivity. The polypeptide is Sensory neuron membrane protein 1 (Helicoverpa assulta (Oriental tobacco budworm)).